The primary structure comprises 401 residues: Solute carrier family 22 member 17 (401 aa).

Transmembrane regions (helical) follow at residues 10–30 (GIVL…AAAG), 35–55 (IMAL…GVYL), 69–89 (VALA…GLAL), 100–120 (MITA…FLES), 184–203 (NIWK…HAIR), 218–238 (FYLC…FLGV), 247–267 (GILL…LGLW), 277–297 (TFSV…TLLA), 309–329 (GLGL…AQRL), and 336–356 (FLQH…IMLL).

The protein belongs to the major facilitator (TC 2.A.1) superfamily. Organic cation transporter (TC 2.A.1.19) family. As to expression, widely expressed.

The protein resides in the cell membrane. The protein localises to the vacuole membrane. Cell surface receptor for LCN2 (24p3) that plays a key role in iron homeostasis and transport. Able to bind iron-bound LCN2 (holo-24p3), followed by internalization of holo-24p3 and release of iron, thereby increasing intracellular iron concentration and leading to inhibition of apoptosis. Also binds iron-free LCN2 (apo-24p3), followed by internalization of apo-24p3 and its association with an intracellular siderophore, leading to iron chelation and iron transfer to the extracellular medium, thereby reducing intracellular iron concentration and resulting in apoptosis. The sequence is that of Solute carrier family 22 member 17 (Slc22a17) from Mus musculus (Mouse).